A 240-amino-acid polypeptide reads, in one-letter code: Putative RING finger protein ORF96 (240 aa).

The segment at 9 to 44 (CVVCMEEKPLVVFEPCMHHNCCESCSGHVSNCPYCR) adopts an RING-type 1 zinc-finger fold. The RING-type 2; degenerate zinc finger occupies 150-202 (CVICKKEIKEEVGKTYMHACCTATICKPCAKAILKAMVEKEITENLPFCPYCF).

The sequence is that of Putative RING finger protein ORF96 from Ostreid herpesvirus 1 (isolate France) (OsHV-1).